Here is a 327-residue protein sequence, read N- to C-terminus: tRNA uridine(34) hydroxylase (327 aa).

The Rhodanese domain maps to 142 to 240 (DDPDTLVIDT…YLEQVPEAES (99 aa)). Cys-200 serves as the catalytic Cysteine persulfide intermediate.

The protein belongs to the TrhO family.

It carries out the reaction uridine(34) in tRNA + AH2 + O2 = 5-hydroxyuridine(34) in tRNA + A + H2O. Catalyzes oxygen-dependent 5-hydroxyuridine (ho5U) modification at position 34 in tRNAs. The sequence is that of tRNA uridine(34) hydroxylase from Synechococcus sp. (strain CC9605).